Consider the following 332-residue polypeptide: Cytoskeleton protein RodZ (332 aa).

Over 1–111 the chain is Cytoplasmic; it reads MNTETTQDTT…LKKSRKKRDG (111 aa). Positions 19–71 constitute an HTH cro/C1-type domain; that stretch reads LREARERLGLTQQTIAERLCLKITTVRDIEDGTTPADLAPTFLRGYIRSYAKL. A DNA-binding region (H-T-H motif) is located at residues 30–49; it reads QQTIAERLCLKITTVRDIED. A helical; Signal-anchor for type II membrane protein transmembrane segment spans residues 112–132; sequence WLMIITWLVVLVVLGLTGAWW. Residues 133–332 are Periplasmic-facing; it reads WQNHQAQQAE…QVARLTLTAE (200 aa). Positions 149–225 are disordered; it reads HASSMQSQTE…PSQANATQSQ (77 aa). 2 stretches are compositionally biased toward polar residues: residues 151 to 160 and 168 to 182; these read SSMQSQTEGQ and SAPQ…AATP. Residues 190–225 show a composition bias toward low complexity; that stretch reads SATIAATPSTPPSSTTASSAAPSSQSPSQANATQSQ.

The protein belongs to the RodZ family.

Its subcellular location is the cell inner membrane. Functionally, cytoskeletal protein that is involved in cell-shape control through regulation of the length of the long axis. This chain is Cytoskeleton protein RodZ, found in Pectobacterium atrosepticum (strain SCRI 1043 / ATCC BAA-672) (Erwinia carotovora subsp. atroseptica).